The chain runs to 370 residues: L-selectin (370 aa).

The N-terminal stretch at 1–28 (MLCPWKCQNAQRGLWNVFKLWVWIMLCC) is a signal peptide. A propeptide spanning residues 29–38 (DFFAHHGTDC) is cleaved from the precursor. At 39-333 (WTYHYSKRPM…SINEESDYNP (295 aa)) the chain is on the extracellular side. Residues 55–155 (AFCRENYTDL…ACHKAKTALC (101 aa)) enclose the C-type lectin domain. Intrachain disulfides connect Cys57–Cys155, Cys128–Cys147, Cys128–Cys160, Cys160–Cys171, Cys165–Cys180, Cys182–Cys191, Cys197–Cys241, Cys227–Cys254, Cys259–Cys303, and Cys289–Cys316. Asn60, Asn77, and Asn104 each carry an N-linked (GlcNAc...) asparagine glycan. Ca(2+) contacts are provided by Glu118, Asn120, Glu126, Asn143, and Asp144. The region spanning 156–192 (YTASCKPWSCSGHGQCVEVINNYTCNCDLGYYGPECQ) is the EGF-like domain. Asn177 carries an N-linked (GlcNAc...) asparagine glycan. 2 consecutive Sushi domains span residues 195-256 (TQCV…TCRV) and 257-318 (IQCE…RCQK). 3 N-linked (GlcNAc...) asparagine glycosylation sites follow: Asn216, Asn226, and Asn246. 2 N-linked (GlcNAc...) asparagine glycosylation sites follow: Asn308 and Asn320. Residues 334–354 (LFIPVAVMVTAFSGLAFIIWL) traverse the membrane as a helical segment. Residues 355-370 (ARRLKRKSKKVSEKHG) are Cytoplasmic-facing.

It belongs to the selectin/LECAM family. As to quaternary structure, interaction with SELPLG/PSGL1 and PODXL2 is required for promoting recruitment and rolling of leukocytes. This interaction is dependent on the sialyl Lewis X glycan modification of SELPLG and PODXL2, and tyrosine sulfation modifications of SELPLG. Sulfation on 'Tyr-51' of SELPLG is important for L-selectin binding. N-glycosylated. In terms of tissue distribution, highly expressed in lymphocytes from peripheral lymph nodes. Low in lymphocytes isolated from Peyer patches.

Its subcellular location is the cell membrane. Calcium-dependent lectin that mediates cell adhesion by binding to glycoproteins on neighboring cells. Mediates the adherence of lymphocytes to endothelial cells of high endothelial venules in peripheral lymph nodes. Promotes initial tethering and rolling of leukocytes in endothelia. The polypeptide is L-selectin (SELL) (Bos taurus (Bovine)).